Reading from the N-terminus, the 603-residue chain is Thread biopolymer filament subunit gamma (603 aa).

Residues 1-191 (MASHSSVSYR…ENETMEEELK (191 aa)) are head. Residues 158–476 (VKNILGTLNQ…KLLEGQELMV (319 aa)) form the IF rod domain. Residues 193–227 (LTGGVPMSPDSTVNLENVETQVTEMLTEVSNLTLE) are coil 1A. Residues 228–240 (RVRLEIDVDHLRA) form a linker 1 region. The tract at residues 241–341 (TADEIKSKYE…DALNVMREEY (101 aa)) is coil 1B. Residues 342–362 (QQVVTKNVQEAETYCKMQIDQ) are linker 12. Residues 363 to 381 (IQGISTQTTEQISILDKEI) form a coil 2A region. The interval 382–389 (NTLEKELQ) is linker 2. Residues 390–510 (PLNVEYQRLL…SSVGYGASST (121 aa)) form a coil 2B region. The tail stretch occupies residues 511–603 (TLGAISGGYS…GHDSTIILQQ (93 aa)). The span at 562 to 587 (SSSGGHSMYSSSSMKRSSSKSASASA) shows a compositional bias: low complexity. Positions 562–603 (SSSGGHSMYSSSSMKRSSSKSASASAGGYGTSGHDSTIILQQ) are disordered.

Belongs to the intermediate filament family. Coiled-coil heterodimer of an alpha and a gamma subunit. Assemble into 10 nm filaments. Forms a massive, conical, intermediate filament biopolymer of approximately 60 cm.

Its subcellular location is the secreted. It is found in the extracellular space. Released extracellularly into seawater and provides physical and biological defense against invasive organism by modulation of the viscoelastic properties of mucus. This is Thread biopolymer filament subunit gamma from Eptatretus stoutii (Pacific hagfish).